Reading from the N-terminus, the 180-residue chain is N-terminal acetyltransferase B complex catalytic subunit naa20 (180 aa).

One can recognise an N-acetyltransferase domain in the interval 2–156; that stretch reads TDTRKFKATD…DSFDMRKPLS (155 aa).

The protein belongs to the acetyltransferase family. In terms of assembly, component of the N-terminal acetyltransferase B (NatB) complex.

It is found in the cytoplasm. Its subcellular location is the nucleus. It carries out the reaction N-terminal L-methionyl-L-asparaginyl-[protein] + acetyl-CoA = N-terminal N(alpha)-acetyl-L-methionyl-L-asparaginyl-[protein] + CoA + H(+). The enzyme catalyses N-terminal L-methionyl-L-glutaminyl-[protein] + acetyl-CoA = N-terminal N(alpha)-acetyl-L-methionyl-L-glutaminyl-[protein] + CoA + H(+). The catalysed reaction is N-terminal L-methionyl-L-aspartyl-[protein] + acetyl-CoA = N-terminal N(alpha)-acetyl-L-methionyl-L-aspartyl-[protein] + CoA + H(+). It catalyses the reaction N-terminal L-methionyl-L-glutamyl-[protein] + acetyl-CoA = N-terminal N(alpha)-acetyl-L-methionyl-L-glutamyl-[protein] + CoA + H(+). In terms of biological role, catalytic subunit of the NatB N-terminal acetyltransferase, which catalyzes acetylation of the amino-terminal methionine residues of all proteins beginning with Met-Asp or Met-Glu and of some proteins beginning with Met-Asn, Met-Gln or Met-Met. This Schizosaccharomyces pombe (strain 972 / ATCC 24843) (Fission yeast) protein is N-terminal acetyltransferase B complex catalytic subunit naa20 (naa20).